A 346-amino-acid chain; its full sequence is NADH-ubiquinone oxidoreductase chain 2 (346 aa).

11 consecutive transmembrane segments (helical) span residues 3–23 (PLIFTTILMTVLLGTMIVMMS), 25–45 (HWLMIWIGFEMNLLAIIPILM), 59–79 (YFLTQATASMLLMMAIIINLM), 96–116 (IIMTSALAMKLGLTPFHFWVP), 122–142 (ISLTSGLILLTWQKLAPMSIL), 149–169 (INLNILLTMAVLSILVGGWGG), 178–198 (IMAYSSIAHMGWMTAVLVYNP), 200–220 (LTMLNMLIYIMMTLTMFMLFI), 242–262 (TLILITLLSMGGLPPLSGFMP), 274–294 (SSIILPTLMAIMALLNLYFYM), and 322–342 (ITLLPPLIVMSSLLLPLTPML).

Belongs to the complex I subunit 2 family. In terms of assembly, core subunit of respiratory chain NADH dehydrogenase (Complex I) which is composed of 45 different subunits. Interacts with TMEM242.

It localises to the mitochondrion inner membrane. It catalyses the reaction a ubiquinone + NADH + 5 H(+)(in) = a ubiquinol + NAD(+) + 4 H(+)(out). Its function is as follows. Core subunit of the mitochondrial membrane respiratory chain NADH dehydrogenase (Complex I) which catalyzes electron transfer from NADH through the respiratory chain, using ubiquinone as an electron acceptor. Essential for the catalytic activity and assembly of complex I. The chain is NADH-ubiquinone oxidoreductase chain 2 from Equus caballus (Horse).